The sequence spans 317 residues: L-lactate dehydrogenase (317 aa).

Residues valine 17, aspartate 38, lysine 43, and 82 to 83 (GA) contribute to the NAD(+) site. Substrate contacts are provided by residues glutamine 85, arginine 91, and 123–126 (NPVD). Residues 121–123 (VAN) and serine 146 each bind NAD(+). 151-154 (DSAR) is a substrate binding site. Beta-D-fructose 1,6-bisphosphate is bound by residues arginine 156 and histidine 171. The active-site Proton acceptor is the histidine 178. Tyrosine 224 carries the post-translational modification Phosphotyrosine. Threonine 233 is a binding site for substrate.

The protein belongs to the LDH/MDH superfamily. LDH family. Homotetramer.

It localises to the cytoplasm. It carries out the reaction (S)-lactate + NAD(+) = pyruvate + NADH + H(+). Its pathway is fermentation; pyruvate fermentation to lactate; (S)-lactate from pyruvate: step 1/1. With respect to regulation, allosterically activated by fructose 1,6-bisphosphate (FBP). Functionally, catalyzes the conversion of lactate to pyruvate. The polypeptide is L-lactate dehydrogenase (Moorella thermoacetica (strain ATCC 39073 / JCM 9320)).